The sequence spans 463 residues: NADH dehydrogenase [ubiquinone] iron-sulfur protein 2, mitochondrial (463 aa).

The N-terminal 33 residues, methionine 1–glycine 33, are a transit peptide targeting the mitochondrion. The residue at position 62 (lysine 62) is an N6-acetyllysine. Arginine 118 carries the symmetric dimethylarginine modification. Cysteine 326, cysteine 332, and cysteine 347 together coordinate [4Fe-4S] cluster.

It belongs to the complex I 49 kDa subunit family. Core subunit of respiratory chain NADH dehydrogenase (Complex I) which is composed of 45 different subunits. Component of the iron-sulfur (IP) fragment of the enzyme. Interacts with NDUFAF3. Interacts with NDUFAF7. Interacts with CERS2. It depends on [4Fe-4S] cluster as a cofactor. Post-translationally, dimethylation at Arg-118 by NDUFAF7 takes place after NDUFS2 assembles into the complex I, leading to stabilize the early intermediate complex.

It localises to the mitochondrion inner membrane. It catalyses the reaction a ubiquinone + NADH + 5 H(+)(in) = a ubiquinol + NAD(+) + 4 H(+)(out). In terms of biological role, core subunit of the mitochondrial membrane respiratory chain NADH dehydrogenase (Complex I) which catalyzes electron transfer from NADH through the respiratory chain, using ubiquinone as an electron acceptor. Essential for the catalytic activity and assembly of complex I. Redox-sensitive, critical component of the oxygen-sensing pathway in the pulmonary vasculature which plays a key role in acute pulmonary oxygen-sensing and hypoxic pulmonary vasoconstriction. Plays an important role in carotid body sensing of hypoxia. Essential for glia-like neural stem and progenitor cell proliferation, differentiation and subsequent oligodendrocyte or neuronal maturation. This is NADH dehydrogenase [ubiquinone] iron-sulfur protein 2, mitochondrial (NDUFS2) from Pongo pygmaeus (Bornean orangutan).